The primary structure comprises 392 residues: Formate-dependent phosphoribosylglycinamide formyltransferase (392 aa).

Residues 22-23 and Glu82 contribute to the N(1)-(5-phospho-beta-D-ribosyl)glycinamide site; that span reads EL. ATP contacts are provided by residues Arg114, Lys155, 160–165, 195–198, and Glu203; these read SSGKGQ and EGEV. Positions 119–308 constitute an ATP-grasp domain; sequence RLAAETLALP…EFALHVRAFL (190 aa). Mg(2+)-binding residues include Glu267 and Glu279. N(1)-(5-phospho-beta-D-ribosyl)glycinamide is bound by residues Asp286, Lys355, and 362–363; that span reads RR.

Belongs to the PurK/PurT family. Homodimer.

The catalysed reaction is N(1)-(5-phospho-beta-D-ribosyl)glycinamide + formate + ATP = N(2)-formyl-N(1)-(5-phospho-beta-D-ribosyl)glycinamide + ADP + phosphate + H(+). It participates in purine metabolism; IMP biosynthesis via de novo pathway; N(2)-formyl-N(1)-(5-phospho-D-ribosyl)glycinamide from N(1)-(5-phospho-D-ribosyl)glycinamide (formate route): step 1/1. Functionally, involved in the de novo purine biosynthesis. Catalyzes the transfer of formate to 5-phospho-ribosyl-glycinamide (GAR), producing 5-phospho-ribosyl-N-formylglycinamide (FGAR). Formate is provided by PurU via hydrolysis of 10-formyl-tetrahydrofolate. The polypeptide is Formate-dependent phosphoribosylglycinamide formyltransferase (Edwardsiella ictaluri (strain 93-146)).